The sequence spans 629 residues: tRNA uridine 5-carboxymethylaminomethyl modification enzyme MnmG (629 aa).

Residues 14–19, Val-126, and Ser-181 each bind FAD; that span reads GAGHAG. 273-287 contributes to the NAD(+) binding site; the sequence is GPRYCPSIEDKVVRF. Gln-370 is an FAD binding site.

It belongs to the MnmG family. As to quaternary structure, homodimer. Heterotetramer of two MnmE and two MnmG subunits. Requires FAD as cofactor.

It localises to the cytoplasm. In terms of biological role, NAD-binding protein involved in the addition of a carboxymethylaminomethyl (cmnm) group at the wobble position (U34) of certain tRNAs, forming tRNA-cmnm(5)s(2)U34. The protein is tRNA uridine 5-carboxymethylaminomethyl modification enzyme MnmG of Bacillus thuringiensis (strain Al Hakam).